The sequence spans 507 residues: Maturase K (507 aa).

It belongs to the intron maturase 2 family. MatK subfamily.

It is found in the plastid. The protein resides in the chloroplast. In terms of biological role, usually encoded in the trnK tRNA gene intron. Probably assists in splicing its own and other chloroplast group II introns. The polypeptide is Maturase K (Araucaria heterophylla (Norfolk Island pine)).